A 413-amino-acid polypeptide reads, in one-letter code: MAFKSIAVLSACIIVGSALPVDKYPVLKDQPAEVLFRENNPTVLECIIEGNDQGVKYSWKKDGKSYNWQEHNAALRKDEGSLVFLRPQASDEGHYQCFAETPAGVASSRVISFRKTYLIASPAKTHEKTPIEGRPFQLDCVLPNAYPKPLITWKKRLSGADPNADVTDFDRRITAGPDGNLYFTIVTKEDVSDIYKYVCTAKNAAVDEEVVLVEYEIKGVTKDNSGYKGEPVPQYVSKDMMAKAGDVTMIYCMYGSNPMGYPNYFKNGKDVNGNPEDRITRHNRTSGKRLLFKTTLPEDEGVYTCEVDNGVGKPQKHSLKLTVVSAPKYEQKPEKVIVVKQGQDVTIPCKVTGLPAPNVVWSHNAKPLSGGRATVTDSGLVIKGVKNGDKGYYGCRATNEHGDKYFETLVQVN.

The N-terminal stretch at 1-19 (MAFKSIAVLSACIIVGSAL) is a signal peptide. Ig-like C2-type domains follow at residues 25–112 (PVLK…RVIS), 122–211 (PAKT…EEVV), 233–322 (PQYV…LKLT), and 327–413 (PKYE…VQVN). 4 disulfide bridges follow: Cys46/Cys97, Cys140/Cys199, Cys252/Cys305, and Cys349/Cys395. An N-linked (GlcNAc...) asparagine glycan is attached at Asn283.

It belongs to the hemolin family. As to expression, hemolymph.

The protein resides in the secreted. It is found in the extracellular space. Its function is as follows. Insect-immune protein. Forms a protein complex at the bacterial surface. Can inhibit hemocyte aggregation. The protein is Hemolin of Hyalophora cecropia (Cecropia moth).